A 508-amino-acid chain; its full sequence is Enhancer of mRNA-decapping protein 3 (508 aa).

In terms of domain architecture, Sm spans 1 to 68 (MAADWLGSIV…ITELKILEIP (68 aa)). The required for P-body targeting and interaction with DCP1A stretch occupies residues 1-79 (MAADWLGSIV…PGGNQHFGDV (79 aa)). Residues 95–192 (ISQNGTGKLV…QMKNKDDECF (98 aa)) form a disordered region. Phosphoserine occurs at positions 131, 138, 140, and 161. Residues 191 to 296 (CFGDDIEEIP…HKKLLSVAEK (106 aa)) form a required for interaction with DDX6 region. One can recognise a DFDF domain in the interval 192–228 (FGDDIEEIPDTDFDFEGNLALFDKAAVFEEIGTYERR). Positions 283-487 (SYEQHKKLLS…DIGIPQQVFQ (205 aa)) constitute a YjeF N-terminal domain.

It belongs to the EDC3 family. As to quaternary structure, homodimer (via YjeF N-terminal domain). Forms a complex with DCP1A, DCP2, DDX6 and EDC4/HEDLS, within this complex directly interacts with DCP1A and DDX6. Interacts with ZFP36.

Its subcellular location is the cytoplasm. The protein resides in the P-body. Functionally, binds single-stranded RNA. Involved in the process of mRNA degradation and in the positive regulation of mRNA decapping. The chain is Enhancer of mRNA-decapping protein 3 (EDC3) from Macaca fascicularis (Crab-eating macaque).